The following is a 575-amino-acid chain: Membrane protein insertase YidC (575 aa).

Helical transmembrane passes span V6–D26, F357–F377, W381–A401, G448–V468, P490–P510, and P526–V546.

This sequence belongs to the OXA1/ALB3/YidC family. Type 1 subfamily. In terms of assembly, interacts with the Sec translocase complex via SecD. Specifically interacts with transmembrane segments of nascent integral membrane proteins during membrane integration.

The protein localises to the cell inner membrane. Required for the insertion and/or proper folding and/or complex formation of integral membrane proteins into the membrane. Involved in integration of membrane proteins that insert both dependently and independently of the Sec translocase complex, as well as at least some lipoproteins. Aids folding of multispanning membrane proteins. This is Membrane protein insertase YidC from Xanthomonas campestris pv. campestris (strain B100).